A 315-amino-acid polypeptide reads, in one-letter code: Methionyl-tRNA formyltransferase (315 aa).

114 to 117 (SLLP) is a binding site for (6S)-5,6,7,8-tetrahydrofolate.

The protein belongs to the Fmt family.

The enzyme catalyses L-methionyl-tRNA(fMet) + (6R)-10-formyltetrahydrofolate = N-formyl-L-methionyl-tRNA(fMet) + (6S)-5,6,7,8-tetrahydrofolate + H(+). Functionally, attaches a formyl group to the free amino group of methionyl-tRNA(fMet). The formyl group appears to play a dual role in the initiator identity of N-formylmethionyl-tRNA by promoting its recognition by IF2 and preventing the misappropriation of this tRNA by the elongation apparatus. This chain is Methionyl-tRNA formyltransferase, found in Corynebacterium efficiens (strain DSM 44549 / YS-314 / AJ 12310 / JCM 11189 / NBRC 100395).